Consider the following 273-residue polypeptide: Putative pyruvate, phosphate dikinase regulatory protein (273 aa).

Position 153–160 (153–160 (GISRTSKT)) interacts with ADP.

This sequence belongs to the pyruvate, phosphate/water dikinase regulatory protein family. PDRP subfamily.

It catalyses the reaction N(tele)-phospho-L-histidyl/L-threonyl-[pyruvate, phosphate dikinase] + ADP = N(tele)-phospho-L-histidyl/O-phospho-L-threonyl-[pyruvate, phosphate dikinase] + AMP + H(+). It carries out the reaction N(tele)-phospho-L-histidyl/O-phospho-L-threonyl-[pyruvate, phosphate dikinase] + phosphate + H(+) = N(tele)-phospho-L-histidyl/L-threonyl-[pyruvate, phosphate dikinase] + diphosphate. In terms of biological role, bifunctional serine/threonine kinase and phosphorylase involved in the regulation of the pyruvate, phosphate dikinase (PPDK) by catalyzing its phosphorylation/dephosphorylation. This Rhizobium leguminosarum bv. trifolii (strain WSM2304) protein is Putative pyruvate, phosphate dikinase regulatory protein.